Consider the following 284-residue polypeptide: 2-dehydro-3-deoxyphosphooctonate aldolase (284 aa).

The protein belongs to the KdsA family.

The protein resides in the cytoplasm. It catalyses the reaction D-arabinose 5-phosphate + phosphoenolpyruvate + H2O = 3-deoxy-alpha-D-manno-2-octulosonate-8-phosphate + phosphate. The protein operates within carbohydrate biosynthesis; 3-deoxy-D-manno-octulosonate biosynthesis; 3-deoxy-D-manno-octulosonate from D-ribulose 5-phosphate: step 2/3. It participates in bacterial outer membrane biogenesis; lipopolysaccharide biosynthesis. The chain is 2-dehydro-3-deoxyphosphooctonate aldolase from Burkholderia mallei (strain NCTC 10247).